Consider the following 404-residue polypeptide: Translation initiation factor eIF2B subunit gamma (404 aa).

This sequence belongs to the eIF-2B gamma/epsilon subunits family. As to quaternary structure, component of the translation initiation factor 2B (eIF2B) complex which is a heterodecamer of two sets of five different subunits: alpha, beta, gamma, delta and epsilon. Subunits alpha, beta and delta comprise a regulatory subcomplex and subunits epsilon and gamma comprise a catalytic subcomplex. Within the complex, the hexameric regulatory complex resides at the center, with the two heterodimeric catalytic subcomplexes bound on opposite sides.

The protein localises to the cytoplasm. It is found in the cytosol. Its function is as follows. Acts as a component of the translation initiation factor 2B (eIF2B) complex, which catalyzes the exchange of GDP for GTP on the eukaryotic initiation factor 2 (eIF2) complex gamma subunit. Its guanine nucleotide exchange factor activity is repressed when bound to eIF2 complex phosphorylated on the alpha subunit, thereby limiting the amount of methionyl-initiator methionine tRNA available to the ribosome and consequently global translation is repressed. The polypeptide is Translation initiation factor eIF2B subunit gamma (Caenorhabditis elegans).